The following is a 110-amino-acid chain: uncharacterized protein (110 aa).

The protein belongs to the HesB/IscA family.

This is an uncharacterized protein from Rickettsia prowazekii (strain Madrid E).